The following is a 153-amino-acid chain: Phosphatase NudJ (153 aa).

The Nudix hydrolase domain maps to 3-131 (KPHVTVACVV…LVAESIRCYQ (129 aa)). The short motif at 36–57 (GHLEADETLVEAAARELWEETG) is the Nudix box element.

The protein belongs to the Nudix hydrolase family. NudJ subfamily. Monomer. Requires Mg(2+) as cofactor.

The sequence is that of Phosphatase NudJ (nudJ) from Escherichia coli O139:H28 (strain E24377A / ETEC).